Reading from the N-terminus, the 214-residue chain is ER lumen protein-retaining receptor 3 (214 aa).

Residues 1–4 (MNVF) are Lumenal-facing. The helical transmembrane segment at 5–24 (RILGDLSHLLAMILLLVKIW) threads the bilayer. At 25–32 (RSKSCAGI) the chain is on the cytoplasmic side. A helical membrane pass occupies residues 33 to 52 (SGKSQILFALVFTTRYLDLF). Residues 47–48 (RY) form an interaction with the K-D-E-L motif on target proteins region. Over 53–58 (SNFISI) the chain is Lumenal. A helical transmembrane segment spans residues 59–79 (YNTVMKVVFLLCAYVTVYMIY). Residues 80-92 (WKFRKTFDIENDT) lie on the Cytoplasmic side of the membrane. A helical membrane pass occupies residues 93–110 (FRLEFLLVPVTGLSFLVN). Residues 111–116 (YSYTPM) lie on the Lumenal side of the membrane. Residues 117-135 (EVLWTFSIYLESVAILPQL) traverse the membrane as a helical segment. At 136–149 (FMISKTGEAETITT) the chain is on the cytoplasmic side. A helical membrane pass occupies residues 150–168 (HYLFFLGLYRLLYLANWIR). The interaction with the K-D-E-L motif on target proteins stretch occupies residues 159-169 (RLLYLANWIRR). Over 169-178 (RYQTENFYDQ) the chain is Lumenal. Residues 179-199 (ISVVSGVVQTIFYCDFFYLYV) traverse the membrane as a helical segment. The Cytoplasmic segment spans residues 200–214 (TKVLKGKKLSLPVPV). Positions 204 to 207 (KGKK) are important for recycling of cargo proteins with the sequence motif K-D-E-L from the Golgi to the endoplasmic reticulum.

It belongs to the ERD2 family.

It localises to the endoplasmic reticulum membrane. The protein resides in the golgi apparatus membrane. Its subcellular location is the cytoplasmic vesicle. It is found in the COPI-coated vesicle membrane. Functionally, receptor for the C-terminal sequence motif K-D-E-L that is present on endoplasmic reticulum resident proteins and that mediates their recycling from the Golgi back to the endoplasmic reticulum. In Mus musculus (Mouse), this protein is ER lumen protein-retaining receptor 3 (Kdelr3).